The primary structure comprises 215 residues: Fanconi anemia core complex-associated protein 24 (215 aa).

Belongs to the multisubunit FA complex composed of FANCA, FANCB, FANCC, FANCE, FANCF, FANCG, FANCL/PHF9, FANCM and FAAP24. Interacts with FANCM.

It is found in the nucleus. Functionally, plays a role in DNA repair through recruitment of the FA core complex to damaged DNA. Regulates FANCD2 monoubiquitination upon DNA damage. Induces chromosomal instability as well as hypersensitivity to DNA cross-linking agents, when repressed. Targets FANCM/FAAP24 complex to the DNA, preferentially to single strand DNA. This is Fanconi anemia core complex-associated protein 24 from Bos taurus (Bovine).